The chain runs to 97 residues: Large ribosomal subunit protein eL21 (97 aa).

Positions 1-23 (MTKMSKGPRSGSRRVMTKSVKNK) are disordered.

This sequence belongs to the eukaryotic ribosomal protein eL21 family.

The chain is Large ribosomal subunit protein eL21 from Picrophilus torridus (strain ATCC 700027 / DSM 9790 / JCM 10055 / NBRC 100828 / KAW 2/3).